A 223-amino-acid chain; its full sequence is Thiamine-phosphate synthase (223 aa).

4-amino-2-methyl-5-(diphosphooxymethyl)pyrimidine contacts are provided by residues 37-41 (QLREK) and Asn69. Residues Asp70 and Asp89 each contribute to the Mg(2+) site. Ser108 contributes to the 4-amino-2-methyl-5-(diphosphooxymethyl)pyrimidine binding site. 134–136 (TGT) is a binding site for 2-[(2R,5Z)-2-carboxy-4-methylthiazol-5(2H)-ylidene]ethyl phosphate. Residue Lys137 participates in 4-amino-2-methyl-5-(diphosphooxymethyl)pyrimidine binding. Residues Gly167 and 187-188 (VS) each bind 2-[(2R,5Z)-2-carboxy-4-methylthiazol-5(2H)-ylidene]ethyl phosphate. Residues 197 to 223 (AAATRKLQGSVDTASVESQLPSEEPSA) are disordered. Polar residues predominate over residues 206-217 (SVDTASVESQLP).

Belongs to the thiamine-phosphate synthase family. Mg(2+) is required as a cofactor.

It carries out the reaction 2-[(2R,5Z)-2-carboxy-4-methylthiazol-5(2H)-ylidene]ethyl phosphate + 4-amino-2-methyl-5-(diphosphooxymethyl)pyrimidine + 2 H(+) = thiamine phosphate + CO2 + diphosphate. The enzyme catalyses 2-(2-carboxy-4-methylthiazol-5-yl)ethyl phosphate + 4-amino-2-methyl-5-(diphosphooxymethyl)pyrimidine + 2 H(+) = thiamine phosphate + CO2 + diphosphate. It catalyses the reaction 4-methyl-5-(2-phosphooxyethyl)-thiazole + 4-amino-2-methyl-5-(diphosphooxymethyl)pyrimidine + H(+) = thiamine phosphate + diphosphate. It functions in the pathway cofactor biosynthesis; thiamine diphosphate biosynthesis; thiamine phosphate from 4-amino-2-methyl-5-diphosphomethylpyrimidine and 4-methyl-5-(2-phosphoethyl)-thiazole: step 1/1. Condenses 4-methyl-5-(beta-hydroxyethyl)thiazole monophosphate (THZ-P) and 2-methyl-4-amino-5-hydroxymethyl pyrimidine pyrophosphate (HMP-PP) to form thiamine monophosphate (TMP). The polypeptide is Thiamine-phosphate synthase (Haloquadratum walsbyi (strain DSM 16790 / HBSQ001)).